A 106-amino-acid polypeptide reads, in one-letter code: Large ribosomal subunit protein uL24 (106 aa).

This sequence belongs to the universal ribosomal protein uL24 family. As to quaternary structure, part of the 50S ribosomal subunit.

In terms of biological role, one of two assembly initiator proteins, it binds directly to the 5'-end of the 23S rRNA, where it nucleates assembly of the 50S subunit. Its function is as follows. One of the proteins that surrounds the polypeptide exit tunnel on the outside of the subunit. The protein is Large ribosomal subunit protein uL24 of Polaromonas naphthalenivorans (strain CJ2).